The sequence spans 508 residues: Fc receptor-like protein 2 (508 aa).

Residues methionine 1 to serine 19 form the signal peptide. 4 Ig-like C2-type domains span residues leucine 20–valine 98, proline 109–arginine 187, proline 201–asparagine 290, and proline 300–serine 387. The Extracellular portion of the chain corresponds to leucine 20–valine 401. An intrachain disulfide couples cysteine 128 to cysteine 177. Asparagine 204, asparagine 234, asparagine 343, asparagine 355, and asparagine 365 each carry an N-linked (GlcNAc...) asparagine glycan. Intrachain disulfides connect cysteine 226-cysteine 275 and cysteine 321-cysteine 368. The helical transmembrane segment at leucine 402–phenylalanine 422 threads the bilayer. Topologically, residues histidine 423–serine 508 are cytoplasmic. The segment at serine 429–proline 453 is disordered. The span at proline 441 to threonine 452 shows a compositional bias: polar residues. 4 consecutive short sequence motifs (ITIM motif) follow at residues phenylalanine 446 to proline 451, proline 460 to valine 465, valine 472 to valine 477, and valine 500 to valine 505.

As to quaternary structure, the tyrosine-phosphorylated isoform 2 interacts with PTPN6. Post-translationally, isoform 2 is N- and O-glycosylated, and phosphorylated. As to expression, expressed in the secondary lymphoid organs, spleen and lymph node. Expression is limited to the mature B-cell lines. Highly expressed in CD19 and within the mantle zones of the tonsil tissue. Isoform 2 is expressed in the spleen, peripheral blood and bone marrow. Isoform 2 and isoform 4 are expressed in B-cell lines. Preferentially expressed in memory B-cells (at protein level).

Its subcellular location is the cell membrane. May have an regulatory role in normal and neoplastic B cell development. This Homo sapiens (Human) protein is Fc receptor-like protein 2 (FCRL2).